The primary structure comprises 369 residues: Ubiquinone biosynthesis protein COQ4, mitochondrial (369 aa).

Residues 1–28 (MTSILGSARPLIQVGPKSRNASTSMSRL) constitute a mitochondrion transit peptide. Residues 1–70 (MTSILGSARP…NPTNASRHPR (70 aa)) are disordered. Polar residues-rich tracts occupy residues 19-33 (RNASTSMSRLPSFPT) and 47-66 (YATISPTAPRSSQRNPTNAS). Positions 198, 199, 202, and 214 each coordinate Zn(2+). The tract at residues 330–369 (FSGRAKKGGKRRGWPSKILEHQKAQHQQQQQQQKVDESRN) is disordered. Over residues 332–343 (GRAKKGGKRRGW) the composition is skewed to basic residues.

This sequence belongs to the COQ4 family. In terms of assembly, component of a multi-subunit COQ enzyme complex, composed of at least COQ3, COQ4, COQ5, COQ6, COQ7 and COQ9. It depends on Zn(2+) as a cofactor.

It localises to the mitochondrion inner membrane. The enzyme catalyses a 4-hydroxy-3-methoxy-5-(all-trans-polyprenyl)benzoate + H(+) = a 2-methoxy-6-(all-trans-polyprenyl)phenol + CO2. It participates in cofactor biosynthesis; ubiquinone biosynthesis. Its function is as follows. Lyase that catalyzes the C1-decarboxylation of 4-hydroxy-3-methoxy-5-(all-trans-polyprenyl)benzoic acid into 2-methoxy-6-(all-trans-polyprenyl)phenol during ubiquinone biosynthesis. The sequence is that of Ubiquinone biosynthesis protein COQ4, mitochondrial from Mycosarcoma maydis (Corn smut fungus).